The chain runs to 162 residues: Mitochondrial intermembrane space import and assembly protein 40 homolog (162 aa).

Residues 1–61 form a disordered region; that stretch reads MGQAQSDENS…DNENESLEAK (61 aa). Low complexity predominate over residues 9–18; that stretch reads NSIPTTTTTN. Disulfide bonds link Cys68/Cys70, Cys79/Cys112, and Cys89/Cys102. Positions 76 to 120 constitute a CHCH domain; that stretch reads NGSCGSQFSEAFLCFLKSTAEEKGSDCVNPFVALQSCINANPDAF. Short sequence motifs (cx9C motif) lie at residues 79–89 and 102–112; these read CGSQFSEAFLC and CVNPFVALQSC. Residues 119 to 162 form a disordered region; sequence AFSKSVTGDEKETEKKEEQPPVQDHRIIPPLWAKDPPRSGNSKL. Over residues 125-145 the composition is skewed to basic and acidic residues; the sequence is TGDEKETEKKEEQPPVQDHRI.

The protein resides in the mitochondrion intermembrane space. It is found in the peroxisome matrix. Its function is as follows. Required for the import and folding of small cysteine-containing proteins in the mitochondrial intermembrane space. Involved in the mitochondrial oxidative folding of the copper-zinc superoxide dismutase CSD1, the copper chaperone for superoxide dismutase CCS, and subunits of the mitochondrial membrane respiratory chain NADH dehydrogenase (Complex I). Involved in the peroxisomal oxidative folding of the copper-zinc superoxide dismutase CSD3, and the fatty acid beta-oxidation multifunctional protein AIM1. This is Mitochondrial intermembrane space import and assembly protein 40 homolog from Arabidopsis thaliana (Mouse-ear cress).